The chain runs to 169 residues: EP300-interacting inhibitor of differentiation 1 (169 aa).

Positions 31–50 (GRGARGPAPEEGPMEEEAGP) are disordered. The interval 54–120 (RAQRGLFPEA…AGDALDGGFQ (67 aa)) is interaction with NR0B2. Positions 150–154 (LGCDE) match the LXCXE motif motif.

As to quaternary structure, interacts via its LXCXE motif with the entire pocket region of RB1. Interacts with EP300, NR0B2 and TRIM27. In terms of tissue distribution, expressed in all adult tissues examined and during embryogenesis.

The protein localises to the nucleus. Its subcellular location is the cytoplasm. In terms of biological role, interacts with RB1 and EP300 and acts as a repressor of MYOD1 transactivation. Inhibits EP300 and CBP histone acetyltransferase activity. May be involved in coupling cell cycle exit to the transcriptional activation of genes required for cellular differentiation. May act as a candidate coinhibitory factor for NR0B2 that can be directly linked to transcription inhibitory mechanisms. The protein is EP300-interacting inhibitor of differentiation 1 of Mus musculus (Mouse).